Consider the following 319-residue polypeptide: 1-aminocyclopropane-1-carboxylate oxidase (319 aa).

One can recognise a Fe2OG dioxygenase domain in the interval 153–253; it reads PTFGTKVSNY…RMSIASFYNP (101 aa). Positions 177, 179, and 234 each coordinate Fe cation.

Belongs to the iron/ascorbate-dependent oxidoreductase family. Fe cation serves as cofactor.

It catalyses the reaction 1-aminocyclopropane-1-carboxylate + L-ascorbate + O2 = ethene + L-dehydroascorbate + hydrogen cyanide + CO2 + 2 H2O. Its pathway is alkene biosynthesis; ethylene biosynthesis via S-adenosyl-L-methionine; ethylene from S-adenosyl-L-methionine: step 2/2. In Actinidia deliciosa (Kiwi), this protein is 1-aminocyclopropane-1-carboxylate oxidase (ACO).